The following is a 179-amino-acid chain: Large ribosomal subunit protein uL5 (179 aa).

The protein belongs to the universal ribosomal protein uL5 family. As to quaternary structure, part of the 50S ribosomal subunit; part of the 5S rRNA/L5/L18/L25 subcomplex. Contacts the 5S rRNA and the P site tRNA. Forms a bridge to the 30S subunit in the 70S ribosome.

Functionally, this is one of the proteins that bind and probably mediate the attachment of the 5S RNA into the large ribosomal subunit, where it forms part of the central protuberance. In the 70S ribosome it contacts protein S13 of the 30S subunit (bridge B1b), connecting the 2 subunits; this bridge is implicated in subunit movement. Contacts the P site tRNA; the 5S rRNA and some of its associated proteins might help stabilize positioning of ribosome-bound tRNAs. The polypeptide is Large ribosomal subunit protein uL5 (Pseudomonas entomophila (strain L48)).